The chain runs to 578 residues: Alpha-(1,6)-fucosyltransferase (578 aa).

Over 1–9 (MRPWTGSWR) the chain is Cytoplasmic. A helical; Signal-anchor for type II membrane protein membrane pass occupies residues 10–30 (WIMLILFAWGTLLFYIGGHLV). Over 31 to 578 (RDNENPDHSS…KYPTYQEAEK (548 aa)) the chain is Lumenal. Intrachain disulfides connect Cys-207–Cys-269, Cys-215–Cys-233, and Cys-221–Cys-225. The 288-residue stretch at 209–496 (KAKKLVCNIN…PDASAHFHSL (288 aa)) folds into the GT23 domain. The SH3-binding signature appears at 302–308 (PRPPYLP). Residues 368-369 (RR) are important for donor substrate binding. Cys-468 and Cys-475 form a disulfide bridge. The SH3 domain maps to 505 to 566 (QNAHNQLAIY…PSYKVKEKIE (62 aa)).

It belongs to the glycosyltransferase 23 family.

The protein resides in the golgi apparatus. Its subcellular location is the golgi stack membrane. The enzyme catalyses N(4)-{beta-D-GlcNAc-(1-&gt;2)-alpha-D-Man-(1-&gt;3)-[beta-D-GlcNAc-(1-&gt;2)-alpha-D-Man-(1-&gt;6)]-beta-D-Man-(1-&gt;4)-beta-D-GlcNAc-(1-&gt;4)-beta-D-GlcNAc}-L-asparaginyl-[protein] + GDP-beta-L-fucose = an N(4)-{beta-D-GlcNAc-(1-&gt;2)-alpha-D-Man-(1-&gt;3)-[beta-D-GlcNAc-(1-&gt;2)-alpha-D-Man-(1-&gt;6)]-beta-D-Man-(1-&gt;4)-beta-D-GlcNAc-(1-&gt;4)-[alpha-L-Fuc-(1-&gt;6)]-beta-D-GlcNAc}-L-asparaginyl-[protein] + GDP + H(+). It functions in the pathway protein modification; protein glycosylation. In terms of biological role, catalyzes the addition of fucose in alpha 1-6 linkage to the first GlcNAc residue, next to the peptide chains in N-glycans. This is Alpha-(1,6)-fucosyltransferase (fut8) from Xenopus tropicalis (Western clawed frog).